The primary structure comprises 155 residues: Interleukin-2 (155 aa).

A signal peptide spans 1–20; the sequence is MYSMQLASCVALTLVLLVNS. Thr-23 is a glycosylation site (O-linked (GalNAc...) threonine). A disulfide bond links Cys-78 and Cys-126.

Belongs to the IL-2 family.

The protein localises to the secreted. Its function is as follows. Cytokine produced by activated CD4-positive helper T-cells and to a lesser extend activated CD8-positive T-cells and natural killer (NK) cells that plays pivotal roles in the immune response and tolerance. Binds to a receptor complex composed of either the high-affinity trimeric IL-2R (IL2RA/CD25, IL2RB/CD122 and IL2RG/CD132) or the low-affinity dimeric IL-2R (IL2RB and IL2RG). Interaction with the receptor leads to oligomerization and conformation changes in the IL-2R subunits resulting in downstream signaling starting with phosphorylation of JAK1 and JAK3. In turn, JAK1 and JAK3 phosphorylate the receptor to form a docking site leading to the phosphorylation of several substrates including STAT5. This process leads to activation of several pathways including STAT, phosphoinositide-3-kinase/PI3K and mitogen-activated protein kinase/MAPK pathways. Functions as a T-cell growth factor and can increase NK-cell cytolytic activity as well. Promotes strong proliferation of activated B-cells and subsequently immunoglobulin production. Plays a pivotal role in regulating the adaptive immune system by controlling the survival and proliferation of regulatory T-cells, which are required for the maintenance of immune tolerance. Moreover, participates in the differentiation and homeostasis of effector T-cell subsets, including Th1, Th2, Th17 as well as memory CD8-positive T-cells. The sequence is that of Interleukin-2 (Il2) from Rattus norvegicus (Rat).